The chain runs to 246 residues: MTSEAAPASTAVTYKRVMLKISGEALMGDQGYGLHPPTVQRIAREVQAVHRLGVEICLVIGGGNIFRGLQGSAQGMERTTADYMGMLATVMNALAMQAALESLGIFTRVISAIPMDQVCEPYIRRRAVRHLEKKRVCIFAAGTGNPYFTTDTAATLRANEMACQAIFKGTKVDGVYDKDPRKFADAKRYETVSYDECLQKHLGVMDASAIALARDNDLPIIVFSLDEPGGFCGILRGEGTYTRVQG.

ATP is bound at residue 20–23; it reads KISG. The interval 28-33 is involved in allosteric activation by GTP; that stretch reads GDQGYG. Glycine 62 lines the UMP pocket. ATP contacts are provided by glycine 63 and arginine 67. UMP-binding positions include aspartate 82 and 143-150; that span reads TGNPYFTT. Residues threonine 170, tyrosine 176, and aspartate 179 each coordinate ATP.

Belongs to the UMP kinase family. Homohexamer.

It is found in the cytoplasm. The catalysed reaction is UMP + ATP = UDP + ADP. It functions in the pathway pyrimidine metabolism; CTP biosynthesis via de novo pathway; UDP from UMP (UMPK route): step 1/1. With respect to regulation, allosterically activated by GTP. Inhibited by UTP. Its function is as follows. Catalyzes the reversible phosphorylation of UMP to UDP. This Cereibacter sphaeroides (strain ATCC 17023 / DSM 158 / JCM 6121 / CCUG 31486 / LMG 2827 / NBRC 12203 / NCIMB 8253 / ATH 2.4.1.) (Rhodobacter sphaeroides) protein is Uridylate kinase.